Here is a 359-residue protein sequence, read N- to C-terminus: Chorismate synthase (359 aa).

Residue Arg-47 participates in NADP(+) binding. Residues 123 to 125 (RSS), Gly-283, 298 to 302 (KPTSS), and Arg-326 each bind FMN.

This sequence belongs to the chorismate synthase family. Homotetramer. Requires FMNH2 as cofactor.

It catalyses the reaction 5-O-(1-carboxyvinyl)-3-phosphoshikimate = chorismate + phosphate. It functions in the pathway metabolic intermediate biosynthesis; chorismate biosynthesis; chorismate from D-erythrose 4-phosphate and phosphoenolpyruvate: step 7/7. Its function is as follows. Catalyzes the anti-1,4-elimination of the C-3 phosphate and the C-6 proR hydrogen from 5-enolpyruvylshikimate-3-phosphate (EPSP) to yield chorismate, which is the branch point compound that serves as the starting substrate for the three terminal pathways of aromatic amino acid biosynthesis. This reaction introduces a second double bond into the aromatic ring system. The chain is Chorismate synthase from Chlamydia caviae (strain ATCC VR-813 / DSM 19441 / 03DC25 / GPIC) (Chlamydophila caviae).